A 368-amino-acid chain; its full sequence is Glutamate 5-kinase (368 aa).

K12 is a binding site for ATP. Substrate contacts are provided by S52, D139, and N151. ATP contacts are provided by residues 171–172 (SD) and 213–219 (TGGMKTK). Positions 277–354 (KGALIIDDGA…KEIEKLLGYI (78 aa)) constitute a PUA domain.

It belongs to the glutamate 5-kinase family.

Its subcellular location is the cytoplasm. The enzyme catalyses L-glutamate + ATP = L-glutamyl 5-phosphate + ADP. It participates in amino-acid biosynthesis; L-proline biosynthesis; L-glutamate 5-semialdehyde from L-glutamate: step 1/2. Catalyzes the transfer of a phosphate group to glutamate to form L-glutamate 5-phosphate. In Pelagibacter ubique (strain HTCC1062), this protein is Glutamate 5-kinase.